Here is a 1385-residue protein sequence, read N- to C-terminus: Probable serine/threonine-protein kinase DDB_G0268876 (1385 aa).

One can recognise a Protein kinase domain in the interval 758–1008 (LELTKEIGRG…QQIITYLENL (251 aa)). ATP-binding positions include 764–772 (IGRGVSGVV) and lysine 785. The active-site Proton acceptor is the aspartate 878. Disordered regions lie at residues 1040–1074 (GGNS…ENKI), 1091–1266 (EVSK…SVGG), and 1287–1339 (ISSS…NNNN). The span at 1055–1073 (VSGSNNNESSTAVSLNENK) shows a compositional bias: polar residues. A compositionally biased stretch (low complexity) spans 1107–1144 (SSSTSSSPSTLSAPQSPVGSTSPMGSTSTSPISNNNNR). Positions 1145–1162 (PTHDHQQPHQVKWERIVP) are enriched in basic and acidic residues. Composition is skewed to low complexity over residues 1189 to 1232 (NNNN…SSGI), 1242 to 1266 (FLSS…SVGG), and 1295 to 1339 (NNNN…NNNN).

Belongs to the protein kinase superfamily. TKL Ser/Thr protein kinase family.

The catalysed reaction is L-seryl-[protein] + ATP = O-phospho-L-seryl-[protein] + ADP + H(+). It carries out the reaction L-threonyl-[protein] + ATP = O-phospho-L-threonyl-[protein] + ADP + H(+). This chain is Probable serine/threonine-protein kinase DDB_G0268876, found in Dictyostelium discoideum (Social amoeba).